The chain runs to 223 residues: Ras-related protein Rab-21 (223 aa).

N-acetylalanine is present on A2. GTP-binding residues include G26, G29, K30, T31, S32, N43, D44, H46, T48, and T49. T31 is a Mg(2+) binding site. The Switch 1 signature appears at 41-54 (KFNDKHITTLQASF). Mg(2+) is bound by residues T49 and D72. The Switch 2 signature appears at 74–92 (AGQERFHALGPIYYRDSNG). GTP contacts are provided by G75, N130, K131, D133, A161, and K162. S-geranylgeranyl cysteine attachment occurs at residues C219 and C220. The residue at position 220 (C220) is a Cysteine methyl ester. A propeptide spans 221–223 (SSG) (removed in mature form).

Belongs to the small GTPase superfamily. Rab family. Interacts with the cytoplasmic tail of integrins ITGA1, ITGA2, ITGA5, ITGA6, ITGA11 and ITGB1; this interaction is dependent upon its GDP/GTP cycle. Interacts with RABGEF1 (via VPS9 domain). Interacts with ANKRD27. Interacts (in GTP-bound form) with VAMP8 in response to starvation; the interaction probably regulates VAMP8 endolysosomal trafficking. Interacts (active GTP-bound form) with TMED10; the interaction is indirect and regulates TMED10 abundance and localization at the Golgi. The cofactor is Mg(2+).

Its subcellular location is the endoplasmic reticulum membrane. The protein localises to the golgi apparatus. It localises to the trans-Golgi network. The protein resides in the golgi apparatus membrane. It is found in the early endosome membrane. Its subcellular location is the cytoplasmic vesicle membrane. The protein localises to the cleavage furrow. It localises to the cell projection. The protein resides in the neuron projection. It catalyses the reaction GTP + H2O = GDP + phosphate + H(+). With respect to regulation, regulated by guanine nucleotide exchange factors (GEFs) including ANKRD27 and RABGEF1, which promote the exchange of bound GDP for free GTP. Regulated by GTPase activating proteins (GAPs) which increase the GTP hydrolysis activity. Inhibited by GDP dissociation inhibitors (GDIs). Functionally, the small GTPases Rab are key regulators of intracellular membrane trafficking, from the formation of transport vesicles to their fusion with membranes. Rabs cycle between an inactive GDP-bound form and an active GTP-bound form that is able to recruit to membranes different sets of downstream effectors directly responsible for vesicle formation, movement, tethering and fusion. RAB21 is involved in membrane trafficking control. Regulates integrin internalization and recycling, but does not influence the traffic of endosomally translocated receptors in general. As a result, may regulate cell adhesion and migration. During the mitosis of adherent cells, controls the endosomal trafficking of integrins which is required for the successful completion of cytokinesis. Involved in neurite growth. Following SBF2/MTMT13-mediated activation in response to starvation-induced autophagy, binds to and regulates SNARE protein VAMP8 endolysosomal transport required for SNARE-mediated autophagosome-lysosome fusion. Modulates protein levels of the cargo receptors TMED2 and TMED10, and required for appropriate Golgi localization of TMED10. This Rattus norvegicus (Rat) protein is Ras-related protein Rab-21.